The following is an 88-amino-acid chain: CRISPR-associated endoribonuclease Cas2 2 (88 aa).

Aspartate 8 provides a ligand contact to Mg(2+).

The protein belongs to the CRISPR-associated endoribonuclease Cas2 protein family. Homodimer, forms a heterotetramer with a Cas1 homodimer. The cofactor is Mg(2+).

Its function is as follows. CRISPR (clustered regularly interspaced short palindromic repeat), is an adaptive immune system that provides protection against mobile genetic elements (viruses, transposable elements and conjugative plasmids). CRISPR clusters contain sequences complementary to antecedent mobile elements and target invading nucleic acids. CRISPR clusters are transcribed and processed into CRISPR RNA (crRNA). Functions as a ssRNA-specific endoribonuclease. Involved in the integration of spacer DNA into the CRISPR cassette. The chain is CRISPR-associated endoribonuclease Cas2 2 (cas22) from Saccharolobus solfataricus (strain ATCC 35092 / DSM 1617 / JCM 11322 / P2) (Sulfolobus solfataricus).